The chain runs to 129 residues: Glycine cleavage system H protein (129 aa).

Positions 24-106 (SVVVGVTQHA…YGAGWIVEIE (83 aa)) constitute a Lipoyl-binding domain. Lys65 is subject to N6-lipoyllysine.

This sequence belongs to the GcvH family. The glycine cleavage system is composed of four proteins: P, T, L and H. Requires (R)-lipoate as cofactor.

In terms of biological role, the glycine cleavage system catalyzes the degradation of glycine. The H protein shuttles the methylamine group of glycine from the P protein to the T protein. The sequence is that of Glycine cleavage system H protein from Myxococcus xanthus (strain DK1622).